The chain runs to 578 residues: MIRLPRLYQRYLLYLVVFVVIALFYFLQAPRVEEHIGFDLALPISHVDNLWFQNKGLEGFSNDDKLVVNIGYDECFHIGRFYEGCFNRHELKSTLTDGHQYLQRKRIHKDLRGSFGRRWFGKSEYLYYDVLYPALVDYFGSNLEKLNVEAVTGISKYPKDKSLPFMDVSITFEPISIELLQKRSYISDINILFGVDCIQPIANWTLQKEFPLVKYRYSEPAYLTYKFVGTRPVDTGAQRLQETDEGKFKIVQLADLHLGVGESECIDEYPKHEACKADPKTETFVQQVLDIEKPQLVVFTGDQIMGDRSIQDSETVLLKAVAPVIARKIPWAMVWGNHDDEGSLTRWQLSEIASVLPYSLFKFSPHDTHDNTFGVGNYIYQIFSNNDTEVPVGTLYFLDSHKYSTVGKIYPGYDWIKESQWKYIEDYHDVNLKFKTGLSMAFFHIPLPEYLNIESKTHPGEKNPLIGMYKEGVTAPKYNSEGITTLDRLSVDVVSCGHDHCNDYCLRDDSTPNKIWLCYGGGGGEGGYAGYGGTERRIRIYEINVNENNIHTWKRLNGSPKEIFDFQSMLDGNSPESV.

116 to 123 (GRRWFGKS) provides a ligand contact to ATP.

Its subcellular location is the cytoplasm. Required for cell cycle progression. Has a role in the completion of START. This is Phosphatase DCR2 (DCR2) from Saccharomyces cerevisiae (strain ATCC 204508 / S288c) (Baker's yeast).